Consider the following 303-residue polypeptide: D-alanine--D-alanine ligase (303 aa).

An ATP-grasp domain is found at 104 to 300 (KLMWQAVGLP…FEKLVERVLE (197 aa)). 132-187 (IAKLGLPVFVKPSSEGSSVGVTKVKTVEQLLPAVEEALKFDSIVLVEAFLAGKEYS) provides a ligand contact to ATP. Mg(2+) contacts are provided by Asp-254, Glu-267, and Asn-269.

This sequence belongs to the D-alanine--D-alanine ligase family. Mg(2+) serves as cofactor. Requires Mn(2+) as cofactor.

The protein resides in the cytoplasm. The enzyme catalyses 2 D-alanine + ATP = D-alanyl-D-alanine + ADP + phosphate + H(+). It participates in cell wall biogenesis; peptidoglycan biosynthesis. In terms of biological role, cell wall formation. In Actinobacillus pleuropneumoniae serotype 5b (strain L20), this protein is D-alanine--D-alanine ligase.